The sequence spans 119 residues: Flagellar transcriptional regulator FlhD (119 aa).

It belongs to the FlhD family. Homodimer; disulfide-linked. Forms a heterohexamer composed of two FlhC and four FlhD subunits. Each FlhC binds a FlhD dimer, forming a heterotrimer, and a hexamer assembles by dimerization of two heterotrimers.

Its subcellular location is the cytoplasm. Functions in complex with FlhC as a master transcriptional regulator that regulates transcription of several flagellar and non-flagellar operons by binding to their promoter region. Activates expression of class 2 flagellar genes, including fliA, which is a flagellum-specific sigma factor that turns on the class 3 genes. Also regulates genes whose products function in a variety of physiological pathways. In Shigella dysenteriae serotype 1 (strain Sd197), this protein is Flagellar transcriptional regulator FlhD.